The chain runs to 178 residues: Small ribosomal subunit protein uS4 (178 aa).

Residues 104–166 (RRLQTLVYRK…PNSPMALENH (63 aa)) enclose the S4 RNA-binding domain.

Belongs to the universal ribosomal protein uS4 family. As to quaternary structure, part of the 30S ribosomal subunit. Contacts protein S5. The interaction surface between S4 and S5 is involved in control of translational fidelity.

Its function is as follows. One of the primary rRNA binding proteins, it binds directly to 16S rRNA where it nucleates assembly of the body of the 30S subunit. Functionally, with S5 and S12 plays an important role in translational accuracy. This chain is Small ribosomal subunit protein uS4, found in Methanococcus vannielii (strain ATCC 35089 / DSM 1224 / JCM 13029 / OCM 148 / SB).